Here is a 379-residue protein sequence, read N- to C-terminus: Peritrophin-48 (379 aa).

Residues 1 to 20 form the signal peptide; it reads MKAKTLTATLALILLAFAQA. 2 consecutive Chitin-binding type-2 domains span residues 25 to 83 and 86 to 143; these read ASYC…NCFF and ANPC…NTGN. 2 cysteine pairs are disulfide-bonded: cysteine 60–cysteine 73 and cysteine 120–cysteine 133. N-linked (GlcNAc...) asparagine glycans are attached at residues asparagine 150 and asparagine 168. 3 Chitin-binding type-2 domains span residues 151-208, 224-283, and 285-356; these read LSVC…ACSR, TSPC…RTLK, and CNRC…ACEN. An intrachain disulfide couples cysteine 185 to cysteine 198. Residues asparagine 247 and asparagine 252 are each glycosylated (N-linked (GlcNAc...) asparagine). Residues cysteine 324 and cysteine 337 are joined by a disulfide bond. N-linked (GlcNAc...) asparagine glycosylation is found at asparagine 341, asparagine 356, and asparagine 373.

Post-translationally, glycosylated. As to expression, larval peritrophic membrane.

Functionally, binds chitin and may bind related oligosaccharide structures. The chain is Peritrophin-48 from Chrysomya bezziana (Old world screw-worm fly).